The primary structure comprises 861 residues: Oleate activated transcription factor 3 (861 aa).

The segment at residues 19–47 (NCKKRKSKCDRTKPCGTCVRLGDVDSCVY) is a DNA-binding region (zn(2)-C6 fungal-type). A compositionally biased stretch (polar residues) spans 52 to 61 (SGQPESSPSL). The interval 52–99 (SGQPESSPSLNDADPLRKQSTPAERISPGFIKKRRSSQTRQDEDHWQR) is disordered.

It belongs to the OAF3 family.

Its subcellular location is the cytoplasm. It is found in the nucleus. The protein localises to the mitochondrion. Its function is as follows. Transcriptional inhibitor with a significantly increased number of target genes in response to oleate. The polypeptide is Oleate activated transcription factor 3 (OAF3) (Saccharomyces cerevisiae (strain JAY291) (Baker's yeast)).